Consider the following 170-residue polypeptide: Large ribosomal subunit protein bL17 (170 aa).

A compositionally biased stretch (low complexity) spans 134–144; it reads ASAKAAQAQEK. The tract at residues 134–170 is disordered; it reads ASAKAAQAQEKPAQEEEVEATSDEVAYTSEPDKAAEH.

The protein belongs to the bacterial ribosomal protein bL17 family. As to quaternary structure, part of the 50S ribosomal subunit. Contacts protein L32.

This Mycobacterium leprae (strain Br4923) protein is Large ribosomal subunit protein bL17.